A 789-amino-acid polypeptide reads, in one-letter code: 1-phosphatidylinositol 4,5-bisphosphate phosphodiesterase delta-3 (789 aa).

One can recognise a PH domain in the interval 63-172 (RAMLRGSRLR…WVRGLTKLRA (110 aa)). The segment at 73–101 (KIRSRTWHKERLYRLQEDGLSVWFQRRIP) is substrate binding. Phosphoserine is present on S105. EF-hand domains follow at residues 182 to 217 (RLDH…VNVD), 218 to 253 (MNDM…LLKR), and 250 to 285 (LLKR…QGEE). The Ca(2+) site is built by D195, N197, D199, K201, E206, D231, S233, N235, R237, and E242. In terms of domain architecture, PI-PLC X-box spans 337–482 (QDMNQPLAHY…LKGRVLVKGK (146 aa)). H352 is a catalytic residue. Residues N353, E382, and D384 each contribute to the Ca(2+) site. The active site involves H397. E431 is a Ca(2+) binding site. Residues 461 to 519 (SPNPEELPSPEQLKGRVLVKGKKLPAARSEDGRALSDREEEEEDDEEEEEEVEAAAQRR) are disordered. Substrate contacts are provided by K480 and K482. Residues 488–497 (RSEDGRALSD) are compositionally biased toward basic and acidic residues. Residue S496 is modified to Phosphoserine. A compositionally biased stretch (acidic residues) spans 498 to 513 (REEEEEDDEEEEEEVE). The 117-residue stretch at 528 to 644 (LSALAVYCHA…GYVLKPACLR (117 aa)) folds into the PI-PLC Y-box domain. S557 contacts substrate. A Phosphoserine modification is found at S573. Substrate is bound at residue R584. The C2 domain maps to 644 to 769 (RQPDSTFDPE…QGYRHIHLLS (126 aa)). Ca(2+) contacts are provided by I683, D685, N709, D738, Y739, and D740.

Ca(2+) is required as a cofactor. In terms of tissue distribution, present in corneal epithelial cells (at protein level).

It is found in the membrane. It localises to the cytoplasm. The protein localises to the cleavage furrow. The catalysed reaction is a 1,2-diacyl-sn-glycero-3-phospho-(1D-myo-inositol-4,5-bisphosphate) + H2O = 1D-myo-inositol 1,4,5-trisphosphate + a 1,2-diacyl-sn-glycerol + H(+). With respect to regulation, strongly activated by phosphatidic acid. Inhibited by phosphatidylethanolamine (PtdEtn), phosphatidylcholine (PtdCho), sphingomyelin and phosphatidylserine (PtdSer). Functionally, hydrolyzes the phosphatidylinositol 4,5-bisphosphate (PIP2) to generate 2 second messenger molecules diacylglycerol (DAG) and inositol 1,4,5-trisphosphate (IP3). DAG mediates the activation of protein kinase C (PKC), while IP3 releases Ca(2+) from intracellular stores. Essential for trophoblast and placental development. May participate in cytokinesis by hydrolyzing PIP2 at the cleavage furrow. Regulates neurite outgrowth through the inhibition of RhoA/Rho kinase signaling. This chain is 1-phosphatidylinositol 4,5-bisphosphate phosphodiesterase delta-3, found in Homo sapiens (Human).